Consider the following 152-residue polypeptide: Protein Smg homolog (152 aa).

The protein belongs to the Smg family.

In Bordetella petrii (strain ATCC BAA-461 / DSM 12804 / CCUG 43448), this protein is Protein Smg homolog.